A 2440-amino-acid chain; its full sequence is Nuclear receptor corepressor 1 (2440 aa).

Residues Met1 to Ser18 are compositionally biased toward polar residues. Disordered regions lie at residues Met1 to Ser177 and Gln206 to Lys231. An interaction with ZBTB33 and HEXIM1 region spans residues Met1–Ile373. Residues Ser51–Gln64 show a composition bias toward low complexity. 3 stretches are compositionally biased toward basic and acidic residues: residues Pro77–Ser88, Val99–Phe119, and Ala141–Ala155. Ser172 bears the Phosphoserine mark. A coiled-coil region spans residues Ser174–Pro216. Basic and acidic residues predominate over residues Glu212–Lys221. Ser224 bears the Phosphoserine mark. An interaction with SIN3A/B region spans residues Phe254–Asp312. The stretch at Ala299–Asn328 forms a coiled coil. Residues Gln435–Asn486 form the SANT 1 domain. 2 disordered regions span residues Lys497–Glu632 and Asn677–Leu915. The stretch at Arg501–Thr557 forms a coiled coil. Composition is skewed to basic and acidic residues over residues Ser509–Glu531 and Lys541–Gly556. A compositionally biased stretch (low complexity) spans Glu592–Glu605. Residues Glu606–Pro617 are compositionally biased toward pro residues. Residues Val623–Asn674 form the SANT 2 domain. Polar residues predominate over residues Gln698–Ala708. Acidic residues predominate over residues Gln709–Val728. Over residues Glu752–Ala768 the composition is skewed to low complexity. The span at Glu781–Thr792 shows a compositional bias: polar residues. The segment covering Asp820–Asp859 has biased composition (basic and acidic residues). 2 stretches are compositionally biased toward polar residues: residues Gln864–Cys883 and Ser906–Leu915. Residues Arg988–Thr1816 are interaction with ETO. Ser999 carries the phosphoserine modification. The disordered stretch occupies residues Val1022–Ser1046. Residue Lys1106 forms a Glycyl lysine isopeptide (Lys-Gly) (interchain with G-Cter in SUMO1); alternate linkage. Residue Lys1106 forms a Glycyl lysine isopeptide (Lys-Gly) (interchain with G-Cter in SUMO2); alternate linkage. Ser1111 carries the phosphoserine modification. Residue Lys1184 forms a Glycyl lysine isopeptide (Lys-Gly) (interchain with G-Cter in SUMO2) linkage. The interval Lys1184–Ala1204 is disordered. Phosphoserine is present on residues Ser1195, Ser1196, Ser1249, Ser1263, Ser1281, and Ser1322. The residue at position 1336 (Lys1336) is an N6-acetyllysine. The residue at position 1367 (Thr1367) is a Phosphothreonine. A Glycyl lysine isopeptide (Lys-Gly) (interchain with G-Cter in SUMO2) cross-link involves residue Lys1389. A Glycyl lysine isopeptide (Lys-Gly) (interchain with G-Cter in SUMO2); alternate cross-link involves residue Lys1412. Lys1412 is subject to N6-acetyllysine; alternate. The disordered stretch occupies residues Ala1440–Leu1459. Phosphoserine occurs at positions 1450 and 1472. Residues Tyr1488–Ser1512 are compositionally biased toward polar residues. The interval Tyr1488–Ser1554 is disordered. The interaction with C1D stretch occupies residues Arg1501 to Asp2440. Residue Lys1518 forms a Glycyl lysine isopeptide (Lys-Gly) (interchain with G-Cter in SUMO2) linkage. Ser1592 is modified (phosphoserine). Disordered stretches follow at residues Pro1690–Pro1759 and Ser1884–Arg1922. Basic and acidic residues-rich tracts occupy residues Ala1712–Ile1729 and Ala1903–Thr1921. The short motif at Ile1933–Ile1937 is the CORNR box 1 element. The interval Ser1943–Pro1969 is disordered. Low complexity predominate over residues Ser1952–Ser1963. Phosphoserine occurs at positions 1977 and 1981. The segment at Pro2006–Gln2041 is disordered. Over residues Gln2020–Gln2035 the composition is skewed to low complexity. The segment at Pro2032–Pro2115 is ID1. The required for interaction with RARA in the absence of its ligand stretch occupies residues Arg2047–Thr2050. A CORNR box 2 motif is present at residues Ile2055–Ile2059. Residues Gln2067 to Ser2086 are compositionally biased toward low complexity. Residues Gln2067–Val2155 are disordered. Over residues Ala2087 to Val2110 the composition is skewed to polar residues. Phosphoserine occurs at positions 2102, 2120, 2136, 2151, and 2184. Over residues Leu2124–Val2142 the composition is skewed to basic and acidic residues. The interval Ile2212–Gly2273 is ID2. Residues Leu2263–Ile2267 carry the CORNR box 3 motif. The segment at Ser2287–Asp2440 is disordered. The segment covering Thr2296 to Gly2305 has biased composition (polar residues). Thr2399 bears the Phosphothreonine mark. 2 stretches are compositionally biased toward polar residues: residues Ala2407–Arg2418 and Gln2431–Asp2440. 2 positions are modified to phosphoserine: Ser2436 and Ser2438.

Belongs to the N-CoR nuclear receptor corepressors family. As to quaternary structure, forms a large corepressor complex that contains SIN3A/B and histone deacetylases HDAC1 and HDAC2. This complex associates with the thyroid receptor (TR) and the retinoid acid receptor (RAR) in the absence of ligand. Interacts directly with RARA; the interaction is facilitated with RARA trimethylation. Component of the N-Cor repressor complex, at least composed of CBFA2T3, HEXIM1, NCOR1, NCOR2, HDAC3, TBL1X, TBL1XR1, CORO2A and GPS2. Interacts with ZBTB33; the interaction serves to recruit the N-CoR complex to promoter regions containing methylated CpG dinucleotides. Interacts with TRIM28 and KDM3A. Interacts (via the RD1 domain) with BAZ1A (via its N-terminal); the interaction corepresses a number of NCOR1-regulated genes. Interacts with BCL6, C1D, DACH1, HEXIM1, HDAC7, RORA, RORC, SAP30, SIAH2, SIN3A and SIN3B. May interact with DEAF1. Interacts with RXRA. Interacts with SETD5. Interacts with VDR. Interacts with ZBTB7A. Interacts with AR. Interacts with HDAC3. In terms of processing, ubiquitinated; mediated by SIAH2 and leading to its subsequent proteasomal degradation.

It localises to the nucleus. In terms of biological role, mediates transcriptional repression by certain nuclear receptors. Part of a complex which promotes histone deacetylation and the formation of repressive chromatin structures which may impede the access of basal transcription factors. Participates in the transcriptional repressor activity produced by BCL6. Recruited by ZBTB7A to the androgen response elements/ARE on target genes, negatively regulates androgen receptor signaling and androgen-induced cell proliferation. Mediates the NR1D1-dependent repression and circadian regulation of TSHB expression. The NCOR1-HDAC3 complex regulates the circadian expression of the core clock gene ARTNL/BMAL1 and the genes involved in lipid metabolism in the liver. In Homo sapiens (Human), this protein is Nuclear receptor corepressor 1 (NCOR1).